The following is a 463-amino-acid chain: Endoglucanase (463 aa).

Positions 1–27 (MVEKRKIFTVLCACGIGFTSYTSCISA) are cleaved as a signal peptide. A propeptide spanning residues 28–55 (AAIDNDTLINNGHKINSSIITNSSQVSA) is cleaved from the precursor. The active-site Proton donor is glutamate 130. Catalysis depends on aspartate 191, which acts as the Nucleophile.

The protein belongs to the glycosyl hydrolase 8 (cellulase D) family. Post-translationally, the N- and the C-terminus may be subjected to proteolysis.

The enzyme catalyses Endohydrolysis of (1-&gt;4)-beta-D-glucosidic linkages in cellulose, lichenin and cereal beta-D-glucans.. The polypeptide is Endoglucanase (Bacillus sp. (strain KSM-330)).